Here is a 418-residue protein sequence, read N- to C-terminus: Protease LasA (418 aa).

An N-terminal signal peptide occupies residues 1 to 31; sequence MQHKRSRAMASPRSPFLFVLLALAVGGTANA. A propeptide spanning residues 32-236 is cleaved from the precursor; the sequence is HDDGLPAFRY…ARQLQAKAAL (205 aa). Residues His-259 and Asp-272 each coordinate Zn(2+). Residues Cys-301 and Cys-347 are joined by a disulfide bond. Residues His-317 and His-356 each act as proton donor/acceptor in the active site. His-358 serves as a coordination point for Zn(2+). Residues Cys-391 and Cys-406 are joined by a disulfide bond.

This sequence belongs to the peptidase M23A family. Zn(2+) serves as cofactor. Post-translationally, processing of pro-LasA can occur extracellularly and requires elastase (lasB). Secretion and processing may be linked.

Its subcellular location is the secreted. Involved in proteolysis and elastolysis (degradation of the host protein elastin). Has staphylolytic activity (degrades pentaglycine cross-links in cell wall peptidoglycan), preferring Gly-Gly-|-X substrates where X is Ala or Gly. Enhances the elastolytic but not proteolytic activity of elastase (lasB) and elastolytic activity of other proteases. Degradation of host elastin is likely to contribute to the pathogenicity of P.aeruginosa. While either His-317 or His-356 can abstract a proton in the hydrolysis reaction, the same residue performs both functions in a given catalytic cycle, with the other stabilizing the catalytic intermediate. This is Protease LasA (lasA) from Pseudomonas aeruginosa (strain ATCC 15692 / DSM 22644 / CIP 104116 / JCM 14847 / LMG 12228 / 1C / PRS 101 / PAO1).